The following is a 446-amino-acid chain: Argininosuccinate lyase (446 aa).

This sequence belongs to the lyase 1 family. Argininosuccinate lyase subfamily.

It localises to the cytoplasm. It carries out the reaction 2-(N(omega)-L-arginino)succinate = fumarate + L-arginine. Its pathway is amino-acid biosynthesis; L-arginine biosynthesis; L-arginine from L-ornithine and carbamoyl phosphate: step 3/3. This is Argininosuccinate lyase from Phocaeicola vulgatus (strain ATCC 8482 / DSM 1447 / JCM 5826 / CCUG 4940 / NBRC 14291 / NCTC 11154) (Bacteroides vulgatus).